The chain runs to 422 residues: S-adenosylmethionine synthase (422 aa).

Residue H15 coordinates ATP. Position 17 (D17) interacts with Mg(2+). E43 contributes to the K(+) binding site. Residues E56 and Q99 each contribute to the L-methionine site. Positions 99–109 (QSPDISRGVTE) are flexible loop. Residues 166 to 168 (DGK), 232 to 233 (RF), D241, 247 to 248 (RK), A264, and K268 contribute to the ATP site. D241 serves as a coordination point for L-methionine. Position 272 (K272) interacts with L-methionine. Residues 390–422 (AVPATTNGAGSKNGSGSKKEPKRKGKKETGAQA) form a disordered region.

Belongs to the AdoMet synthase family. In terms of assembly, homotetramer; dimer of dimers. It depends on Mg(2+) as a cofactor. Requires K(+) as cofactor.

The protein localises to the cytoplasm. The catalysed reaction is L-methionine + ATP + H2O = S-adenosyl-L-methionine + phosphate + diphosphate. It participates in amino-acid biosynthesis; S-adenosyl-L-methionine biosynthesis; S-adenosyl-L-methionine from L-methionine: step 1/1. Catalyzes the formation of S-adenosylmethionine (AdoMet) from methionine and ATP. The overall synthetic reaction is composed of two sequential steps, AdoMet formation and the subsequent tripolyphosphate hydrolysis which occurs prior to release of AdoMet from the enzyme. This Sorangium cellulosum (strain So ce56) (Polyangium cellulosum (strain So ce56)) protein is S-adenosylmethionine synthase.